Reading from the N-terminus, the 249-residue chain is MTTNDTYEATYAIPMHCENCVNDIKACLKNVPGINSLNFDIEQQIMSVESSVAPSTIINTLRNCGKDAIIRGAGKPNSSAVAILETFQKYTIDQKKDTAVRGLARIVQVGENKTLFDITVNGVPEAGNYHASIHEKGDVSKGVESTGKVWHKFDEPIECFNESDLGKNLYSGKTFLSAPLPTWQLIGRSFVISKSLNHPENEPSSVKDYSFLGVIARSAGVWENNKQVCACTGKTVWEERKDALANNIK.

The region spanning T6–I69 is the HMA domain. H16 is a Zn(2+) binding site. Cu cation is bound by residues C17 and C20. C27 and C64 are oxidised to a cystine. Cu cation is bound by residues C229 and C231.

It belongs to the CCS1 family. As to quaternary structure, homodimer, and heterodimer with apo-SOD1. Zinc-binding at His-16 of CCS1 and 'Glu-43' of apo-SOD1 is required for this heterodimerization. Cu(2+) serves as cofactor.

Its subcellular location is the cytoplasm. The protein resides in the mitochondrion intermembrane space. Functionally, copper chaperone for apo superoxide dismutase 1 (SOD1). Binds copper ions and delivers them specifically to apo-SOD1. This chain is Superoxide dismutase 1 copper chaperone (CCS1), found in Saccharomyces cerevisiae (strain ATCC 204508 / S288c) (Baker's yeast).